The sequence spans 355 residues: Syntaxin-5 (355 aa).

Over 1 to 333 (MIPRKRYGSK…KYFQSVTSNR (333 aa)) the chain is Cytoplasmic. The short motif at 245–247 (IDM) is the IxM motif; signal for cargo packaging into COPII-coated vesicles element. In terms of domain architecture, t-SNARE coiled-coil homology spans 263–325 (DSYIQSRADT…EAAHSEILKY (63 aa)). Positions 287–318 (FQQLAHMVKEQEETIQRIDENVLGAQLDVEAA) form a coiled coil. Residues 334 to 354 (WLMVKIFLILIVFFIIFVVFL) traverse the membrane as a helical; Anchor for type IV membrane protein segment. A topological domain (vesicular) is located at residue Ala-355.

Belongs to the syntaxin family. Part of a ternary complex containing STX5A, NSFL1C and VCP. Part of a unique SNARE complex composed of the Golgi SNAREs GOSR1, GOSR2, YKT6 and VTI1A. Component of a SNARE complex consisting of STX5, YKT6, GOSR1 and BET1L. Interacts with BET1L. Interacts with BET1. Interacts with COG4. Interacts with GM130/GOLGA2. Interacts (via IxM motif) with SEC24C and SEC24D; mediates STX5 packaging into COPII-coated vesicles. Interacts with VLDLR; this interaction mediates VLDLR translocation from the endoplasmic reticulum to the plasma membrane.

The protein resides in the endoplasmic reticulum-Golgi intermediate compartment membrane. Its subcellular location is the golgi apparatus membrane. Mediates endoplasmic reticulum to Golgi transport. Together with p115/USO1 and GM130/GOLGA2, involved in vesicle tethering and fusion at the cis-Golgi membrane to maintain the stacked and inter-connected structure of the Golgi apparatus. Functionally, required for Golgi to endoplasmic reticulum retrogade transport, and for intra-Golgi transport. The chain is Syntaxin-5 (Stx5) from Mus musculus (Mouse).